Consider the following 227-residue polypeptide: PKHD-type hydroxylase Patl_2273 (227 aa).

Positions 78–178 (KIYPPKFNRY…RTASFFWIES (101 aa)) constitute a Fe2OG dioxygenase domain. Residues H96, D98, and H159 each contribute to the Fe cation site. Residue R169 coordinates 2-oxoglutarate.

Fe(2+) serves as cofactor. It depends on L-ascorbate as a cofactor.

The polypeptide is PKHD-type hydroxylase Patl_2273 (Pseudoalteromonas atlantica (strain T6c / ATCC BAA-1087)).